Consider the following 436-residue polypeptide: MQVSVETTQGLERRLTITVPAESIDSQVKSRLQQLAKTQRINGFRPGKVPVSVIKKRYGQAVRQEIAGEAMQRNFYEAIVQEKITPAGMPNFEMKTDVDGQDLEFVAAFEVYPEVEVKDVEKIEVEKPVVEITDADLETMMETLRKQHATWKEVKRKSKKDDRVTVDFVGTIDGEEFEGGKAENFELEMGKDRMIPGFEKPIVGAKAGEEVVADVTFPEDYHAEALKGKEAQFKITVNKVEGLSLPKVDEEFAKLFGVEDGDVEALNAEVRKNMQRELEQTLKANVKEQVIEGLLANNEIDLPKALVDQEINALREQAKQRFSQQQGGNVDNLPELPADLFQENARKRVSIGLLLGEIIKTEELKVDSAKVDALIETAASAYEDPQEVIEYYKTNDELMQQMQNVALEEQAVEVLLSKANVKEVNKAFDEIMNKQA.

In terms of domain architecture, PPIase FKBP-type spans 161-246 (DDRVTVDFVG…VNKVEGLSLP (86 aa)).

This sequence belongs to the FKBP-type PPIase family. Tig subfamily.

The protein resides in the cytoplasm. The enzyme catalyses [protein]-peptidylproline (omega=180) = [protein]-peptidylproline (omega=0). Functionally, involved in protein export. Acts as a chaperone by maintaining the newly synthesized protein in an open conformation. Functions as a peptidyl-prolyl cis-trans isomerase. The chain is Trigger factor from Pseudoalteromonas atlantica (strain T6c / ATCC BAA-1087).